The sequence spans 449 residues: Tubulin alpha-2 chain (449 aa).

Q11 provides a ligand contact to GTP. At K40 the chain carries N6-acetyllysine. Residues S140, G144, T145, T179, N206, and N228 each coordinate GTP. The active site involves E254.

This sequence belongs to the tubulin family. As to quaternary structure, dimer of alpha and beta chains. A typical microtubule is a hollow water-filled tube with an outer diameter of 25 nm and an inner diameter of 15 nM. Alpha-beta heterodimers associate head-to-tail to form protofilaments running lengthwise along the microtubule wall with the beta-tubulin subunit facing the microtubule plus end conferring a structural polarity. Microtubules usually have 13 protofilaments but different protofilament numbers can be found in some organisms and specialized cells. Acetylation of alpha chains at Lys-40 stabilizes microtubules and affects affinity and processivity of microtubule motors. This modification has a role in multiple cellular functions, ranging from cell motility, cell cycle progression or cell differentiation to intracellular trafficking and signaling.

The protein resides in the cytoplasm. It localises to the cytoskeleton. It catalyses the reaction GTP + H2O = GDP + phosphate + H(+). Functionally, tubulin is the major constituent of microtubules, a cylinder consisting of laterally associated linear protofilaments composed of alpha- and beta-tubulin heterodimers. Microtubules grow by the addition of GTP-tubulin dimers to the microtubule end, where a stabilizing cap forms. Below the cap, tubulin dimers are in GDP-bound state, owing to GTPase activity of alpha-tubulin. The chain is Tubulin alpha-2 chain from Stylonychia lemnae (Ciliate).